The sequence spans 188 residues: dCTP deaminase, dUMP-forming (188 aa).

DCTP is bound by residues 101–106 (KSSLGR), D119, 127–129 (TLE), Q148, Y162, and Q174. E129 (proton donor/acceptor) is an active-site residue.

The protein belongs to the dCTP deaminase family. As to quaternary structure, homotrimer.

The enzyme catalyses dCTP + 2 H2O = dUMP + NH4(+) + diphosphate. It functions in the pathway pyrimidine metabolism; dUMP biosynthesis; dUMP from dCTP: step 1/1. Bifunctional enzyme that catalyzes both the deamination of dCTP to dUTP and the hydrolysis of dUTP to dUMP without releasing the toxic dUTP intermediate. The chain is dCTP deaminase, dUMP-forming from Corynebacterium jeikeium (strain K411).